The chain runs to 1914 residues: Diacylglycerol kinase eta (1914 aa).

Positions 1–10 are enriched in basic and acidic residues; it reads MSHLKLDTLH. The interval 1 to 37 is disordered; sequence MSHLKLDTLHVQRSPRGSRRSSRSSGRSSACSSGSIS. Residues 23 to 37 show a composition bias toward low complexity; that stretch reads RSSGRSSACSSGSIS. The PH domain occupies 82–175; sequence AIIKEGFLLK…WLGSLKTATA (94 aa). 2 Phorbol-ester/DAG-type zinc fingers span residues 195–245 and 268–319; these read HHHW…IANC and PHQW…AVAC. One can recognise a DAGKc domain in the interval 350 to 486; sequence GNFSPLLVFV…DRWSIMVFEK (137 aa). Disordered stretches follow at residues 621-642, 783-805, 1016-1053, 1116-1135, and 1175-1216; these read EKDQ…SEKE, GANI…NTPT, TLCS…PPRI, QHRG…TPTN, and PNTI…TVSL. The segment covering 1175–1187 has biased composition (polar residues); it reads PNTILTTSTSPTK. An SAM domain is found at 1851–1914; the sequence is WSVNEVVTWL…LQAIKDLSEN (64 aa).

This sequence belongs to the eukaryotic diacylglycerol kinase family.

The protein localises to the cytoplasm. It catalyses the reaction a 1,2-diacyl-sn-glycerol + ATP = a 1,2-diacyl-sn-glycero-3-phosphate + ADP + H(+). Functionally, phosphorylates diacylglycerol (DAG) to generate phosphatidic acid (PA). The protein is Diacylglycerol kinase eta of Drosophila sechellia (Fruit fly).